The chain runs to 172 residues: MEKMYNVGKIVNTHGLIGEIRVIATTDFPEERFQVGNTVYLFEKNSKKPEKLIIRSHRKHKNFDLLMFEGFTGIHQVERMKEGVLKIKETQLTNLEENEFYFHEIIGCTVVTTDGEELGEITEILTPGANDVWVVKGADKKEKLIPYIADVVKEINIDDQKITIEVMEGLLD.

A PRC barrel domain is found at 97 to 170 (ENEFYFHEII…KITIEVMEGL (74 aa)).

This sequence belongs to the RimM family. In terms of assembly, binds ribosomal protein uS19.

It localises to the cytoplasm. Its function is as follows. An accessory protein needed during the final step in the assembly of 30S ribosomal subunit, possibly for assembly of the head region. Essential for efficient processing of 16S rRNA. May be needed both before and after RbfA during the maturation of 16S rRNA. It has affinity for free ribosomal 30S subunits but not for 70S ribosomes. The sequence is that of Ribosome maturation factor RimM from Listeria monocytogenes serovar 1/2a (strain ATCC BAA-679 / EGD-e).